The following is a 321-amino-acid chain: MEPPHNSPVPFSIAKMGNPTLLLLSGLLSLTQAISIGEHENKTRHVIVWRHSSSHQCSDWRTVTEWFPPQKGNPVRPPYTQRVSLDTANNTLTVKPFETNNGCWETTSQGINHPPTTIQYRVWNITTTPTIQTINITKITVREGEDFTLYGPVSETMSIIEWEFIKDVTPQFILQYYLSINSTIVYASYQGRVTFNPGKNTLTLKGAKTTDSGTYKSTVNLDQVSVHNFRVGVTPIEKKEEATAETPASKPTPIPRVRADARSTALWVGLALCILTVIPALIGWYFRDRLCVPDPIIELEIPGQPHVTIHILKGPDDDCET.

This is an uncharacterized protein from Galliformes (FAdV-1).